We begin with the raw amino-acid sequence, 170 residues long: Fimbrial protein (170 aa).

Positions 1–7 are cleaved as a propeptide — leader sequence; the sequence is MNTLQKG. Phe8 is subject to N-methylphenylalanine. Residues 8-28 traverse the membrane as a helical segment; sequence FTLIELMIVIAIVGILAAVAL. O-linked (Gal...) serine glycosylation occurs at Ser70. An O-(sn-1-glycerophosphoryl)serine modification is found at Ser100. The cysteines at positions 127 and 163 are disulfide-linked.

Belongs to the N-Me-Phe pilin family. In terms of assembly, the pili are polar flexible filaments of about 5.4 nanometers diameter and 2.5 micrometers average length; they consist of only a single polypeptide chain arranged in a helical configuration of five subunits per turn in the assembled pilus. In terms of processing, O-linked glycan has been reported to consist either of the Gal(alpha1-3) GlcNAc disaccharide, or the Gal(beta 1-4) Gal(alpha 1-3) 2,4-diacetamido-2,4,6-trideoxyhexose trisaccharide.

It localises to the fimbrium. It is found in the membrane. Its function is as follows. Major component of the type IV pilus (T4P) that plays a role in cellular adherence, microcolony formation as well as twitching motility. The sequence is that of Fimbrial protein (pilE) from Neisseria meningitidis serogroup B (strain ATCC BAA-335 / MC58).